The primary structure comprises 198 residues: Putative pseudouridine methyltransferase (198 aa).

S-adenosyl-L-methionine contacts are provided by L132 and C186.

This sequence belongs to the methyltransferase superfamily. TrmY family.

It is found in the cytoplasm. This Vibrio vulnificus (strain CMCP6) protein is Putative pseudouridine methyltransferase.